The primary structure comprises 1775 residues: Stereocilin (1775 aa).

An N-terminal signal peptide occupies residues 1-22 (MALSLWPLLLLLLLLLLLSFAV). N-linked (GlcNAc...) asparagine glycans are attached at residues Asn-65, Asn-202, Asn-297, Asn-366, Asn-427, Asn-476, Asn-540, Asn-565, Asn-656, Asn-824, Asn-916, Asn-964, Asn-1179, and Asn-1274.

The protein belongs to the stereocilin family.

The protein localises to the cell surface. It localises to the cell projection. It is found in the kinocilium. The protein resides in the stereocilium. Essential to the formation of horizontal top connectors between outer hair cell stereocilia. In Homo sapiens (Human), this protein is Stereocilin (STRC).